The following is a 133-amino-acid chain: uncharacterized protein (133 aa).

The interval 44–79 (VENQLASSKTEEQTLKISKKSNLNPAQKSSTFGLEN) is disordered. Positions 63–79 (KSNLNPAQKSSTFGLEN) are enriched in polar residues.

The protein localises to the plastid. It is found in the chloroplast. This is an uncharacterized protein from Chlorella vulgaris (Green alga).